Consider the following 105-residue polypeptide: UPF0145 protein Mevan_1624 (105 aa).

This sequence belongs to the UPF0145 family.

The polypeptide is UPF0145 protein Mevan_1624 (Methanococcus vannielii (strain ATCC 35089 / DSM 1224 / JCM 13029 / OCM 148 / SB)).